Consider the following 81-residue polypeptide: ATP synthase subunit c (81 aa).

Helical transmembrane passes span 3 to 23 (PLIA…GAIG) and 57 to 77 (LAFM…LLFA).

Belongs to the ATPase C chain family. F-type ATPases have 2 components, F(1) - the catalytic core - and F(0) - the membrane proton channel. F(1) has five subunits: alpha(3), beta(3), gamma(1), delta(1), epsilon(1). F(0) has four main subunits: a(1), b(1), b'(1) and c(10-14). The alpha and beta chains form an alternating ring which encloses part of the gamma chain. F(1) is attached to F(0) by a central stalk formed by the gamma and epsilon chains, while a peripheral stalk is formed by the delta, b and b' chains.

It is found in the cellular thylakoid membrane. Its function is as follows. F(1)F(0) ATP synthase produces ATP from ADP in the presence of a proton or sodium gradient. F-type ATPases consist of two structural domains, F(1) containing the extramembraneous catalytic core and F(0) containing the membrane proton channel, linked together by a central stalk and a peripheral stalk. During catalysis, ATP synthesis in the catalytic domain of F(1) is coupled via a rotary mechanism of the central stalk subunits to proton translocation. In terms of biological role, key component of the F(0) channel; it plays a direct role in translocation across the membrane. A homomeric c-ring of between 10-14 subunits forms the central stalk rotor element with the F(1) delta and epsilon subunits. In Trichodesmium erythraeum (strain IMS101), this protein is ATP synthase subunit c.